A 61-amino-acid polypeptide reads, in one-letter code: Putative neurotoxin-D (61 aa).

The N-terminal stretch at 1–19 (MRTTVAILLVLFALSAILA) is a signal peptide. 3 disulfides stabilise this stretch: Cys31/Cys51, Cys37/Cys56, and Cys39/Cys58.

As to expression, expressed by the venom gland.

The protein localises to the secreted. The chain is Putative neurotoxin-D from Lychas mucronatus (Chinese swimming scorpion).